We begin with the raw amino-acid sequence, 368 residues long: DNA replication and repair protein RecF (368 aa).

Residue 30 to 37 (GNNAQGKT) participates in ATP binding.

The protein belongs to the RecF family.

It is found in the cytoplasm. The RecF protein is involved in DNA metabolism; it is required for DNA replication and normal SOS inducibility. RecF binds preferentially to single-stranded, linear DNA. It also seems to bind ATP. This is DNA replication and repair protein RecF from Streptococcus pyogenes serotype M4 (strain MGAS10750).